Here is a 205-residue protein sequence, read N- to C-terminus: uncharacterized protein (205 aa).

Residues 1-82 (MIKVYGVPGW…MVLDRRPDLA (82 aa)) enclose the GST N-terminal domain. Glutathione is bound by residues Val-53 and 66–67 (ET). A GST C-terminal domain is found at 86-205 (GRAERQLFQR…QEVLKRNEII (120 aa)).

The protein belongs to the GST superfamily. Beta family.

This is an uncharacterized protein from Escherichia coli (strain K12).